The primary structure comprises 89 residues: Small ribosomal subunit protein uS15 (89 aa).

This sequence belongs to the universal ribosomal protein uS15 family. As to quaternary structure, part of the 30S ribosomal subunit. Forms a bridge to the 50S subunit in the 70S ribosome, contacting the 23S rRNA.

One of the primary rRNA binding proteins, it binds directly to 16S rRNA where it helps nucleate assembly of the platform of the 30S subunit by binding and bridging several RNA helices of the 16S rRNA. Its function is as follows. Forms an intersubunit bridge (bridge B4) with the 23S rRNA of the 50S subunit in the ribosome. This chain is Small ribosomal subunit protein uS15, found in Kineococcus radiotolerans (strain ATCC BAA-149 / DSM 14245 / SRS30216).